The sequence spans 69 residues: Large ribosomal subunit protein uL29 (69 aa).

It belongs to the universal ribosomal protein uL29 family.

This chain is Large ribosomal subunit protein uL29, found in Natronomonas pharaonis (strain ATCC 35678 / DSM 2160 / CIP 103997 / JCM 8858 / NBRC 14720 / NCIMB 2260 / Gabara) (Halobacterium pharaonis).